The primary structure comprises 275 residues: Exosome complex component Rrp42 (275 aa).

This sequence belongs to the RNase PH family. Rrp42 subfamily. In terms of assembly, component of the archaeal exosome complex. Forms a hexameric ring-like arrangement composed of 3 Rrp41-Rrp42 heterodimers. The hexameric ring associates with a trimer of Rrp4 and/or Csl4 subunits.

Its subcellular location is the cytoplasm. In terms of biological role, non-catalytic component of the exosome, which is a complex involved in RNA degradation. Contributes to the structuring of the Rrp41 active site. The protein is Exosome complex component Rrp42 of Saccharolobus islandicus (strain Y.N.15.51 / Yellowstone #2) (Sulfolobus islandicus).